Reading from the N-terminus, the 2924-residue chain is Zinc finger ZZ-type and EF-hand domain-containing protein 1 (2924 aa).

Residues 1–41 (MGNAPSNSSEDEAAAAGGEGWSPHQDWAADSGTTPGPGPAA) are disordered. Glycine 2 is lipidated: N-myristoyl glycine. Residues 28–41 (AADSGTTPGPGPAA) show a composition bias toward low complexity. The region spanning 111-146 (CSGEQFEEAFAQFDAEGDGTVDAENMLEALKNSSGA) is the EF-hand domain. The region spanning 226–405 (LVQKEKESPG…AIWYWSLLTS (180 aa)) is the DOC domain. The residue at position 240 (serine 240) is a Phosphoserine. Residues 1452-1470 (HLQPLDRRQRTSSVVEEHF) show a composition bias toward basic and acidic residues. A disordered region spans residues 1452–1527 (HLQPLDRRQR…STPTRRPPFT (76 aa)). Residues 1472 to 1485 (GSASPTEAATPAAG) are compositionally biased toward low complexity. Phosphoserine is present on residues serine 1475, serine 1488, and serine 1509. Phosphothreonine is present on threonine 1510. The segment covering 1514–1523 (PSPPSTPTRR) has biased composition (pro residues). Serine 1515 is subject to Phosphoserine. Threonine 1519 and threonine 1521 each carry phosphothreonine. Phosphoserine is present on residues serine 1535 and serine 1538. 2 ZZ-type zinc fingers span residues 1776–1831 (NVDI…FTCD) and 1825–1880 (NMEF…MVTI). Residues cysteine 1781, cysteine 1784, cysteine 1795, cysteine 1798, cysteine 1804, cysteine 1807, histidine 1817, histidine 1821, cysteine 1830, cysteine 1833, cysteine 1844, cysteine 1847, cysteine 1853, cysteine 1856, histidine 1866, and histidine 1870 each contribute to the Zn(2+) site. Positions 2388–2418 (DLELDERGDQEEELDRPVSSPGEAEQKKLDP) are disordered. At serine 2407 the chain carries Phosphoserine. Residue lysine 2630 is modified to N6-acetyllysine.

Interacts with KLF6 and KLF9. Interacts via (ZZ-type 2 zinc finger) with histone H3 trimethylated at 'Lys-4' (H3K4me3) and histone H3 acetylated at 'Lys-4' (H3K4ac).

Functionally, histone H3 reader which may act as a transcriptional coactivator for KLF6 and KLF9 transcription factors. The polypeptide is Zinc finger ZZ-type and EF-hand domain-containing protein 1 (Zzef1) (Mus musculus (Mouse)).